The following is an 867-amino-acid chain: Alanine--tRNA ligase (867 aa).

Zn(2+) contacts are provided by His-556, His-560, Cys-658, and His-662.

This sequence belongs to the class-II aminoacyl-tRNA synthetase family. Requires Zn(2+) as cofactor.

It localises to the cytoplasm. It carries out the reaction tRNA(Ala) + L-alanine + ATP = L-alanyl-tRNA(Ala) + AMP + diphosphate. In terms of biological role, catalyzes the attachment of alanine to tRNA(Ala) in a two-step reaction: alanine is first activated by ATP to form Ala-AMP and then transferred to the acceptor end of tRNA(Ala). Also edits incorrectly charged Ser-tRNA(Ala) and Gly-tRNA(Ala) via its editing domain. This Fusobacterium nucleatum subsp. nucleatum (strain ATCC 25586 / DSM 15643 / BCRC 10681 / CIP 101130 / JCM 8532 / KCTC 2640 / LMG 13131 / VPI 4355) protein is Alanine--tRNA ligase.